The primary structure comprises 291 residues: Alpha-soluble NSF attachment protein (291 aa).

TPR repeat units lie at residues 14 to 51 (ADKR…FKMS), 77 to 110 (AASS…YTDE), 117 to 150 (AKHQ…FDGE), and 157 to 190 (HQCL…SLDN).

The protein belongs to the SNAP family. As to quaternary structure, interacts with nsfA and probably SNARE proteins.

Its subcellular location is the cytoplasmic vesicle membrane. Its function is as follows. May be required for vesicular transport between the endoplasmic reticulum and the Golgi apparatus. Involved in vesicle fusion with nsfA and probably SNARE proteins. The chain is Alpha-soluble NSF attachment protein (snpA) from Dictyostelium discoideum (Social amoeba).